The sequence spans 41 residues: MKILNSLKTAKSRHPDCQIVRRKGKLYVICKTNPRFKARQR.

The protein belongs to the bacterial ribosomal protein bL36 family.

The sequence is that of Large ribosomal subunit protein bL36B from Haemophilus ducreyi (strain 35000HP / ATCC 700724).